The sequence spans 179 residues: Large ribosomal subunit protein uL6 (179 aa).

It belongs to the universal ribosomal protein uL6 family. In terms of assembly, part of the 50S ribosomal subunit.

Its function is as follows. This protein binds to the 23S rRNA, and is important in its secondary structure. It is located near the subunit interface in the base of the L7/L12 stalk, and near the tRNA binding site of the peptidyltransferase center. In Acidothermus cellulolyticus (strain ATCC 43068 / DSM 8971 / 11B), this protein is Large ribosomal subunit protein uL6.